Here is an 80-residue protein sequence, read N- to C-terminus: Small, acid-soluble spore protein Tlp (80 aa).

Residues 34-73 show a composition bias toward basic and acidic residues; it reads AKESMEFATDEEKQRIQEKNARRNESIESFRSEIQDESAA. Residues 34-80 form a disordered region; that stretch reads AKESMEFATDEEKQRIQEKNARRNESIESFRSEIQDESAARENGYQS.

Belongs to the Tlp family.

The protein resides in the spore core. This is Small, acid-soluble spore protein Tlp from Bacillus velezensis (strain DSM 23117 / BGSC 10A6 / LMG 26770 / FZB42) (Bacillus amyloliquefaciens subsp. plantarum).